The sequence spans 64 residues: Large ribosomal subunit protein bL28C (64 aa).

It belongs to the bacterial ribosomal protein bL28 family.

This chain is Large ribosomal subunit protein bL28C, found in Mycobacterium tuberculosis (strain ATCC 25618 / H37Rv).